A 307-amino-acid chain; its full sequence is NAD kinase 1 (307 aa).

Catalysis depends on Asp67, which acts as the Proton acceptor. Residues 67-68 (DG), 149-150 (NE), Arg160, Asp181, and 192-197 (TCYTSS) each bind NAD(+).

Belongs to the NAD kinase family. A divalent metal cation serves as cofactor.

It localises to the cytoplasm. It catalyses the reaction NAD(+) + ATP = ADP + NADP(+) + H(+). Its function is as follows. Involved in the regulation of the intracellular balance of NAD and NADP, and is a key enzyme in the biosynthesis of NADP. Catalyzes specifically the phosphorylation on 2'-hydroxyl of the adenosine moiety of NAD to yield NADP. Essential for photoheterotrophic growth. Has a significant function in the oxidative pentose phosphate (OPP) pathway for glucose catabolism under photoheterotrophic conditions. Is also involved in cellular redox homeostasis. The chain is NAD kinase 1 from Synechocystis sp. (strain ATCC 27184 / PCC 6803 / Kazusa).